Reading from the N-terminus, the 338-residue chain is Fe-S cluster assembly protein DRE2 (338 aa).

The N-terminal SAM-like domain stretch occupies residues 1-165 (MAKSGLLLIH…LPSFKKAANK (165 aa)). A linker region spans residues 166-232 (PLPTFKKKVE…DDLLNEEDAK (67 aa)). The segment at 181 to 223 (VEARVHKAENDDDELEDEEDENLFDASRSKYFDEDDSESLDED) is disordered. Acidic residues-rich tracts occupy residues 190–203 (NDDDELEDEEDENL) and 213–223 (DEDDSESLDED). [2Fe-2S] cluster is bound by residues C242, C253, C256, and C258. The segment at 242-258 (CGKSKTKKKKACKDCSC) is fe-S binding site A. 4 residues coordinate [4Fe-4S] cluster: C301, C304, C312, and C315. 2 short sequence motifs (cx2C motif) span residues 301–304 (CGSC) and 312–315 (CTGC). Residues 301-315 (CGSCSLGDAFRCTGC) are fe-S binding site B.

The protein belongs to the anamorsin family. As to quaternary structure, monomer. Interacts with TAH18. Interacts with MIA40. [2Fe-2S] cluster serves as cofactor. Requires [4Fe-4S] cluster as cofactor.

The protein resides in the cytoplasm. It is found in the mitochondrion intermembrane space. Component of the cytosolic iron-sulfur (Fe-S) protein assembly (CIA) machinery required for the maturation of extramitochondrial Fe-S proteins. Part of an electron transfer chain functioning in an early step of cytosolic Fe-S biogenesis, facilitating the de novo assembly of a [4Fe-4S] cluster on the scaffold complex CFD1-NBP35. Electrons are transferred to DRE2 from NADPH via the FAD- and FMN-containing protein TAH18. TAH18-DRE2 are also required for the assembly of the diferric tyrosyl radical cofactor of ribonucleotide reductase (RNR), probably by providing electrons for reduction during radical cofactor maturation in the catalytic small subunit RNR2. The polypeptide is Fe-S cluster assembly protein DRE2 (Candida glabrata (strain ATCC 2001 / BCRC 20586 / JCM 3761 / NBRC 0622 / NRRL Y-65 / CBS 138) (Yeast)).